The following is a 380-amino-acid chain: MAPNLRKSHPLLKMINNSLIDLPTPPNISAWWNFGSLLGICLMTQILTGLLLAMHYTADTTLAFSSVAHTCRNVQYGWLIRNLHANGASFFFICIYLHIGRGFYYGSYLYKETWNTGVILLLTLMATAFVGYVLPWGQMSFWGATVITNLFSAIPYIGQTLVEWAWGGFSVDNPTLTRFFALHFLLPFMIAGLTLVHLTFLHESGSNNPLGIVSNCDKIPFHPYFTLKDILGFTLMLLPLTTLALFSPNLLGDPENFTPANPLVTPPHIKPEWYFLFAYAILRSIPNKLGGVLALAASVLILFLAPFLHKAKQRTMTFRPLSQLLFWILVANLFILTWVGSQPVEHPFIIIGQLASFTYFTILLILFPIIGALENKMLNY.

Transmembrane regions (helical) follow at residues 34 to 54 (FGSLLGICLMTQILTGLLLAM), 78 to 99 (WLIRNLHANGASFFFICIYLHI), 114 to 134 (WNTGVILLLTLMATAFVGYVL), and 179 to 199 (FFALHFLLPFMIAGLTLVHLT). 2 residues coordinate heme b: histidine 84 and histidine 98. Positions 183 and 197 each coordinate heme b. Histidine 202 serves as a coordination point for a ubiquinone. Helical transmembrane passes span 227 to 247 (LKDILGFTLMLLPLTTLALFS), 289 to 309 (LGGVLALAASVLILFLAPFLH), 321 to 341 (LSQLLFWILVANLFILTWVGS), and 348 to 368 (FIIIGQLASFTYFTILLILFP).

The protein belongs to the cytochrome b family. In terms of assembly, the cytochrome bc1 complex contains 11 subunits: 3 respiratory subunits (MT-CYB, CYC1 and UQCRFS1), 2 core proteins (UQCRC1 and UQCRC2) and 6 low-molecular weight proteins (UQCRH/QCR6, UQCRB/QCR7, UQCRQ/QCR8, UQCR10/QCR9, UQCR11/QCR10 and a cleavage product of UQCRFS1). This cytochrome bc1 complex then forms a dimer. The cofactor is heme b.

It localises to the mitochondrion inner membrane. Functionally, component of the ubiquinol-cytochrome c reductase complex (complex III or cytochrome b-c1 complex) that is part of the mitochondrial respiratory chain. The b-c1 complex mediates electron transfer from ubiquinol to cytochrome c. Contributes to the generation of a proton gradient across the mitochondrial membrane that is then used for ATP synthesis. This is Cytochrome b (MT-CYB) from Procellaria parkinsoni (Black petrel).